Consider the following 192-residue polypeptide: Phosphoheptose isomerase (192 aa).

An SIS domain is found at 37–192 (LADSFKAGGK…IQLIEKEMVK (156 aa)). 52 to 54 (NGG) contacts substrate. 2 residues coordinate Zn(2+): His-61 and Glu-65. Residues Glu-65, 93-94 (ND), 119-121 (STS), Ser-124, and Gln-172 each bind substrate. 2 residues coordinate Zn(2+): Gln-172 and His-180.

It belongs to the SIS family. GmhA subfamily. As to quaternary structure, homotetramer. Zn(2+) is required as a cofactor.

The protein localises to the cytoplasm. It catalyses the reaction 2 D-sedoheptulose 7-phosphate = D-glycero-alpha-D-manno-heptose 7-phosphate + D-glycero-beta-D-manno-heptose 7-phosphate. The protein operates within carbohydrate biosynthesis; D-glycero-D-manno-heptose 7-phosphate biosynthesis; D-glycero-alpha-D-manno-heptose 7-phosphate and D-glycero-beta-D-manno-heptose 7-phosphate from sedoheptulose 7-phosphate: step 1/1. Catalyzes the isomerization of sedoheptulose 7-phosphate in D-glycero-D-manno-heptose 7-phosphate. This is Phosphoheptose isomerase from Escherichia coli O139:H28 (strain E24377A / ETEC).